A 144-amino-acid chain; its full sequence is Large ribosomal subunit protein uL11 (144 aa).

It belongs to the universal ribosomal protein uL11 family. In terms of assembly, part of the ribosomal stalk of the 50S ribosomal subunit. Interacts with L10 and the large rRNA to form the base of the stalk. L10 forms an elongated spine to which L12 dimers bind in a sequential fashion forming a multimeric L10(L12)X complex. In terms of processing, one or more lysine residues are methylated.

Its function is as follows. Forms part of the ribosomal stalk which helps the ribosome interact with GTP-bound translation factors. The protein is Large ribosomal subunit protein uL11 of Deinococcus deserti (strain DSM 17065 / CIP 109153 / LMG 22923 / VCD115).